A 689-amino-acid chain; its full sequence is Glycine--tRNA ligase beta subunit (689 aa).

It belongs to the class-II aminoacyl-tRNA synthetase family. In terms of assembly, tetramer of two alpha and two beta subunits.

Its subcellular location is the cytoplasm. It carries out the reaction tRNA(Gly) + glycine + ATP = glycyl-tRNA(Gly) + AMP + diphosphate. The protein is Glycine--tRNA ligase beta subunit of Shewanella sp. (strain W3-18-1).